Reading from the N-terminus, the 848-residue chain is Aryl hydrocarbon receptor (848 aa).

A propeptide spanning residues 1 to 9 is cleaved from the precursor; that stretch reads MSSGANITY. Residues 1–38 are disordered; sequence MSSGANITYASRKRRKPVQKTVKPIPAEGIKSNPSKRH. 2 consecutive short sequence motifs (nuclear localization signal) follow at residues 12–15 and 36–41; these read RKRR and KRHRDR. The bHLH domain occupies 26–79; it reads PAEGIKSNPSKRHRDRLNTELDRLASLLPFPQDVINKLDKLSVLRLSVSYLRAK. The segment at 37–65 is DNA-binding; that stretch reads RHRDRLNTELDRLASLLPFPQDVINKLDK. Required for maintaining the overall integrity of the AHR:ARNT heterodimer and its transcriptional activity regions lie at residues 49–81, 116–124, and 260–262; these read LASL…AKSF, LLQALNGFV, and FAI. The short motif at 63–71 is the Nuclear export signal element; sequence LDKLSVLRL. The PAS 1 domain occupies 116–179; that stretch reads LLQALNGFVL…RQLHWALNPD (64 aa). The region spanning 269 to 336 is the PAS 2 domain; it reads PSILEIRTKN…CAESHIRMIK (68 aa). The region spanning 342–380 is the PAC domain; that stretch reads MTVFRLFAKHSRWRWVQSNARLIYRNGRPDYIIATQRPL. The interval 421 to 449 is disordered; it reads LPIRTKSNTSRKDWAPQSTPSKDSFHPSS. The segment covering 436–449 has biased composition (polar residues); sequence PQSTPSKDSFHPSS.

Homodimer. Heterodimer; efficient DNA binding requires dimerization with another bHLH protein. Interacts with ARNT; the heterodimer ARNT:AHR binds to core DNA sequence 5'-TGCGTG-3' within the dioxin response element (DRE) of target gene promoters and activates their transcription. Binds MYBBP1A. Interacts with coactivators including SRC-1, RIP140 and NOCA7, and with the corepressor SMRT. Interacts with NEDD8 and IVNS1ABP. Interacts with BMAL1. Interacts with HSP90AB1. Interacts with TIPARP; leading to mono-ADP-ribosylation of AHR and subsequent inhibition of AHR. Post-translationally, mono-ADP-ribosylated, leading to inhibit transcription activator activity of AHR. As to expression, expressed in all tissues tested including brain, heart, kidney, liver, lung, muscle, ovary, skin, spleen and thymus.

The protein resides in the cytoplasm. The protein localises to the nucleus. Functionally, ligand-activated transcription factor that enables cells to adapt to changing conditions by sensing compounds from the environment, diet, microbiome and cellular metabolism, and which plays important roles in development, immunity and cancer. Upon ligand binding, translocates into the nucleus, where it heterodimerizes with ARNT and induces transcription by binding to xenobiotic response elements (XRE). Regulates a variety of biological processes, including angiogenesis, hematopoiesis, drug and lipid metabolism, cell motility and immune modulation. Xenobiotics can act as ligands: upon xenobiotic-binding, activates the expression of multiple phase I and II xenobiotic chemical metabolizing enzyme genes (such as the CYP1A1 gene). Mediates biochemical and toxic effects of halogenated aromatic hydrocarbons. Next to xenobiotics, natural ligands derived from plants, microbiota, and endogenous metabolism are potent AHR agonists. Tryptophan (Trp) derivatives constitute an important class of endogenous AHR ligands. Acts as a negative regulator of anti-tumor immunity: indoles and kynurenic acid generated by Trp catabolism act as ligand and activate AHR, thereby promoting AHR-driven cancer cell motility and suppressing adaptive immunity. Regulates the circadian clock by inhibiting the basal and circadian expression of the core circadian component PER1. Inhibits PER1 by repressing the CLOCK-BMAL1 heterodimer mediated transcriptional activation of PER1. The heterodimer ARNT:AHR binds to core DNA sequence 5'-TGCGTG-3' within the dioxin response element (DRE) of target gene promoters and activates their transcription. The polypeptide is Aryl hydrocarbon receptor (Ahr) (Mus musculus (Mouse)).